The primary structure comprises 1436 residues: DNA polymerase III PolC-type (1436 aa).

Positions 420 to 576 constitute an Exonuclease domain; it reads YVVFDVETTG…YDTEATAYIF (157 aa).

The protein belongs to the DNA polymerase type-C family. PolC subfamily.

It localises to the cytoplasm. The enzyme catalyses DNA(n) + a 2'-deoxyribonucleoside 5'-triphosphate = DNA(n+1) + diphosphate. Required for replicative DNA synthesis. This DNA polymerase also exhibits 3' to 5' exonuclease activity. This Staphylococcus aureus (strain MW2) protein is DNA polymerase III PolC-type.